A 314-amino-acid polypeptide reads, in one-letter code: Cytochrome f (314 aa).

The first 29 residues, 1–29 (MTRSISISVLIISVLIMIYVITRTSISNA), serve as a signal peptide directing secretion. Tyr-30, Cys-50, Cys-53, and His-54 together coordinate heme. A helical transmembrane segment spans residues 280 to 300 (VQGLLFFLASVILAQIFLVLK).

The protein belongs to the cytochrome f family. The 4 large subunits of the cytochrome b6-f complex are cytochrome b6, subunit IV (17 kDa polypeptide, petD), cytochrome f and the Rieske protein, while the 4 small subunits are PetG, PetL, PetM and PetN. The complex functions as a dimer. It depends on heme as a cofactor.

The protein resides in the plastid. Its subcellular location is the chloroplast thylakoid membrane. Component of the cytochrome b6-f complex, which mediates electron transfer between photosystem II (PSII) and photosystem I (PSI), cyclic electron flow around PSI, and state transitions. This is Cytochrome f from Illicium oligandrum (Star anise).